Here is a 155-residue protein sequence, read N- to C-terminus: MLNQQKVVEIYTDGACSGNPGVGGWGAILRWNGHERELYSGEVQTTNNRMELMAAICALKVLKEACSVDLYTDSVYVRNGISLWLERWKMNNWRTTSKKTVKNIELWKALEDVCSLHTIRWHWVKGHAGHPDNERADALARKAITEYRKNGYFSA.

Positions 4-145 constitute an RNase H type-1 domain; it reads QQKVVEIYTD…ADALARKAIT (142 aa). Positions 13, 51, 73, and 137 each coordinate Mg(2+).

Belongs to the RNase H family. As to quaternary structure, monomer. It depends on Mg(2+) as a cofactor.

It localises to the cytoplasm. The catalysed reaction is Endonucleolytic cleavage to 5'-phosphomonoester.. Endonuclease that specifically degrades the RNA of RNA-DNA hybrids. The polypeptide is Ribonuclease H (Bartonella quintana (strain Toulouse) (Rochalimaea quintana)).